A 346-amino-acid chain; its full sequence is Biotin synthase (346 aa).

The 219-residue stretch at 38–256 folds into the Radical SAM core domain; it reads RQVQVSTLLS…IAVARIMMPT (219 aa). [4Fe-4S] cluster-binding residues include C53, C57, and C60. [2Fe-2S] cluster is bound by residues C97, C128, C188, and R260.

The protein belongs to the radical SAM superfamily. Biotin synthase family. In terms of assembly, homodimer. It depends on [4Fe-4S] cluster as a cofactor. Requires [2Fe-2S] cluster as cofactor.

The enzyme catalyses (4R,5S)-dethiobiotin + (sulfur carrier)-SH + 2 reduced [2Fe-2S]-[ferredoxin] + 2 S-adenosyl-L-methionine = (sulfur carrier)-H + biotin + 2 5'-deoxyadenosine + 2 L-methionine + 2 oxidized [2Fe-2S]-[ferredoxin]. It functions in the pathway cofactor biosynthesis; biotin biosynthesis; biotin from 7,8-diaminononanoate: step 2/2. Catalyzes the conversion of dethiobiotin (DTB) to biotin by the insertion of a sulfur atom into dethiobiotin via a radical-based mechanism. The sequence is that of Biotin synthase from Escherichia coli (strain SE11).